The sequence spans 609 residues: Indole-3-acetic acid-amido synthetase GH3.17 (609 aa).

It belongs to the IAA-amido conjugating enzyme family.

Catalyzes the synthesis of indole-3-acetic acid (IAA)-amino acid conjugates, providing a mechanism for the plant to cope with the presence of excess auxin. Strongly reactive with Glu, Gln, Trp, Asp, Ala, Leu, Phe, Gly, Tyr, Met, Ile and Val. Appears to favor Glu over Asp while the other GH3 favor Asp over Glu. Little or no product formation with His, Ser, Thr, Arg, Lys, or Cys. Also active on pyruvic and butyric acid analogs of IAA, PAA and the synthetic auxin naphthaleneacetic acid (NAA). The two chlorinated synthetic auxin herbicides 2,4-D and 3,6-dichloro-o-anisic acid (dicamba) cannot be used as substrates. The polypeptide is Indole-3-acetic acid-amido synthetase GH3.17 (GH3.17) (Arabidopsis thaliana (Mouse-ear cress)).